The chain runs to 375 residues: MQCALFDAGRCRSCQWIEQPVSQQLSAKMTDLQQLLAAHPVAEWCAPVSGPEQGFRNKAKMVVSGSVEKPLLGMLHRDGTPEDLTDCPLYPASFEPVFAALKPFIARAGLTPYNVERKRGELKYLLLTESQLDGGMMLRFILRSEAKLEQLRAALPWLQQQLPQLKVITANIQPVHMAIMEGEREVFFTDQQALAERFNDVPLWIRPHSFFQTNPTVASQLYATARDWVRALNIHHMWDLFCGVGGFGLHCATPQMTLTGIEISPEAIACAKQSAAQLGLTDLHFQALDSAEFATGQGRVPELVLVNPPRRGIGKTLCDYLSQMAPDFIIYSSCNAQTMAKDFGHLPGYRVERVQLFDMFPHTAHYEVLTLLVKS.

[4Fe-4S] cluster contacts are provided by Cys-3, Cys-11, Cys-14, and Cys-87. Positions 212, 241, 262, and 307 each coordinate S-adenosyl-L-methionine. Residue Cys-334 is the Nucleophile of the active site.

The protein belongs to the class I-like SAM-binding methyltransferase superfamily. RNA M5U methyltransferase family. RlmC subfamily.

The enzyme catalyses uridine(747) in 23S rRNA + S-adenosyl-L-methionine = 5-methyluridine(747) in 23S rRNA + S-adenosyl-L-homocysteine + H(+). In terms of biological role, catalyzes the formation of 5-methyl-uridine at position 747 (m5U747) in 23S rRNA. This Enterobacter sp. (strain 638) protein is 23S rRNA (uracil(747)-C(5))-methyltransferase RlmC.